The primary structure comprises 894 residues: B-cell lymphoma/leukemia 11B (894 aa).

2 positions are modified to phosphoserine: Ser-97 and Ser-110. A Phosphothreonine modification is found at Thr-120. Ser-129 is modified (phosphoserine). Lys-137 participates in a covalent cross-link: Glycyl lysine isopeptide (Lys-Gly) (interchain with G-Cter in SUMO2). The C2H2-type 1 zinc-finger motif lies at 221 to 251; it reads YICTTCKQPFNSAWFLLQHAQNTHGFRIYLE. Residue Ser-256 is modified to Phosphoserine. Thr-260 carries the phosphothreonine modification. Ser-277 carries the phosphoserine modification. The residue at position 293 (Arg-293) is an Omega-N-methylarginine. Position 322 is an asymmetric dimethylarginine (Arg-322). Ser-358 is modified (phosphoserine). Disordered regions lie at residues 370-428 and 471-583; these read LAGN…KSKS and KRHM…GGGA. Thr-376 carries the post-translational modification Phosphothreonine. 3 positions are modified to phosphoserine: Ser-381, Ser-398, and Ser-401. Residues 396-423 show a composition bias toward pro residues; that stretch reads QPSPKSPFLSTPPLPPMPPGGTPPPQPP. A phosphothreonine mark is found at Thr-406 and Thr-417. 2 C2H2-type zinc fingers span residues 427 to 454 and 455 to 482; these read KSCE…GEKP and YKCQ…HKAG. The segment covering 471–480 has biased composition (basic residues); sequence KRHMKTHMHK. Phosphoserine is present on residues Ser-483, Ser-488, Ser-496, and Ser-497. Residues 511-529 are compositionally biased toward basic and acidic residues; the sequence is KAADGDFRHHESDPSLGHE. The segment covering 530–546 has biased composition (acidic residues); it reads PEEEDEEEEEEEEELLL. Over residues 568–583 the composition is skewed to gly residues; that stretch reads NGGGGVPGVPGAGGGA. Residues Lys-591 and Lys-617 each participate in a glycyl lysine isopeptide (Lys-Gly) (interchain with G-Cter in SUMO2) cross-link. The disordered stretch occupies residues 653–680; sequence GRGGGFAPGTEPFPGLFPRKPAPLPSPG. The residue at position 678 (Ser-678) is a Phosphoserine. Residues Lys-686 and Lys-723 each participate in a glycyl lysine isopeptide (Lys-Gly) (interchain with G-Cter in SUMO2) cross-link. Over residues 737–752 the composition is skewed to polar residues; the sequence is FATSSEHSSENGSLRF. Residues 737-794 form a disordered region; it reads FATSSEHSSENGSLRFSTPPGDLLDGGLSGRSGTASGGSTPHLGGPGPGRPSSKEGRR. Over residues 753–775 the composition is skewed to low complexity; sequence STPPGDLLDGGLSGRSGTASGGS. Thr-754 is modified (phosphothreonine). Residues Ser-765 and Ser-772 each carry the phosphoserine modification. 3 consecutive C2H2-type zinc fingers follow at residues 796-823, 824-853, and 854-884; these read DTCE…GERP, YKCE…GKEV, and YRCD…LLTN. At Lys-851 the chain carries N6-acetyllysine. Lys-887 is covalently cross-linked (Glycyl lysine isopeptide (Lys-Gly) (interchain with G-Cter in SUMO2)).

Interacts with TFCOUP1, SIRT1, ARP1 and EAR2. Interacts with EP300; the interaction is detected in activated T-lymphocytes, but not under resting conditions. Post-translationally, sumoylated with SUMO1. Highly expressed in brain and in malignant T-cell lines derived from patients with adult T-cell leukemia/lymphoma.

It localises to the nucleus. In terms of biological role, key regulator of both differentiation and survival of T-lymphocytes during thymocyte development in mammals. Essential in controlling the responsiveness of hematopoietic stem cells to chemotactic signals by modulating the expression of the receptors CCR7 and CCR9, which direct the movement of progenitor cells from the bone marrow to the thymus. Is a regulator of IL2 promoter and enhances IL2 expression in activated CD4(+) T-lymphocytes. Tumor-suppressor that represses transcription through direct, TFCOUP2-independent binding to a GC-rich response element. May also function in the P53-signaling pathway. The chain is B-cell lymphoma/leukemia 11B (BCL11B) from Homo sapiens (Human).